The following is a 154-amino-acid chain: Transcriptional repressor NrdR (154 aa).

A zinc finger lies at C3–C34. The ATP-cone domain maps to P49–E139.

It belongs to the NrdR family. Requires Zn(2+) as cofactor.

In terms of biological role, negatively regulates transcription of bacterial ribonucleotide reductase nrd genes and operons by binding to NrdR-boxes. This chain is Transcriptional repressor NrdR, found in Cupriavidus pinatubonensis (strain JMP 134 / LMG 1197) (Cupriavidus necator (strain JMP 134)).